A 217-amino-acid polypeptide reads, in one-letter code: Large ribosomal subunit protein uL3 (217 aa).

Positions 134–146 (GRATHGNSRSHNV) are enriched in polar residues. The interval 134–154 (GRATHGNSRSHNVPGSIGMAQ) is disordered. Glutamine 154 bears the N5-methylglutamine mark.

Belongs to the universal ribosomal protein uL3 family. In terms of assembly, part of the 50S ribosomal subunit. Forms a cluster with proteins L14 and L19. Post-translationally, methylated by PrmB.

In terms of biological role, one of the primary rRNA binding proteins, it binds directly near the 3'-end of the 23S rRNA, where it nucleates assembly of the 50S subunit. This is Large ribosomal subunit protein uL3 from Burkholderia lata (strain ATCC 17760 / DSM 23089 / LMG 22485 / NCIMB 9086 / R18194 / 383).